Consider the following 322-residue polypeptide: N-acetyl-gamma-glutamyl-phosphate reductase (322 aa).

Cys132 is an active-site residue.

This sequence belongs to the NAGSA dehydrogenase family. Type 1 subfamily.

The protein resides in the cytoplasm. The enzyme catalyses N-acetyl-L-glutamate 5-semialdehyde + phosphate + NADP(+) = N-acetyl-L-glutamyl 5-phosphate + NADPH + H(+). Its pathway is amino-acid biosynthesis; L-arginine biosynthesis; N(2)-acetyl-L-ornithine from L-glutamate: step 3/4. In terms of biological role, catalyzes the NADPH-dependent reduction of N-acetyl-5-glutamyl phosphate to yield N-acetyl-L-glutamate 5-semialdehyde. The polypeptide is N-acetyl-gamma-glutamyl-phosphate reductase (Bacteroides fragilis (strain ATCC 25285 / DSM 2151 / CCUG 4856 / JCM 11019 / LMG 10263 / NCTC 9343 / Onslow / VPI 2553 / EN-2)).